A 236-amino-acid chain; its full sequence is Small ribosomal subunit protein uS2c (236 aa).

Belongs to the universal ribosomal protein uS2 family.

It is found in the plastid. The polypeptide is Small ribosomal subunit protein uS2c (rps2) (Cuscuta gronovii (Common dodder)).